Here is a 1537-residue protein sequence, read N- to C-terminus: MTTKRKIIGRLVPCRCFRGEEEIISVLDYSHCSLQQVPKEVFNFERTLEELYLDANQIEELPKQLFNCQALRKLSIPDNDLSNLPTTIASLVNLKELDISKNGVQEFPENIKCCKCLTIIEASVNPISKLPDGFTQLLNLTQLYLNDAFLEFLPANFGRLVKLRILELRENHLKTLPKSMHKLAQLERLDLGNNEFGELPEVLDQIQNLRELWMDNNALQVLPGSIGKLKMLVYLDMSKNRIETVDMDISGCEALEDLLLSSNMLQQLPDSIGLLKKLTTLKVDDNQLTMLPNTIGNLSLLEEFDCSCNELESLPSTIGYLHSLRTLAVDENFLPELPREIGSCKNVTVMSLRSNKLEFLPEEIGQMQKLRVLNLSDNRLKNLPFSFTKLKELAALWLSDNQSKALIPLQTEAHPETKQRVLTNYMFPQQPRGDEDFQSDSDSFNPTLWEEQRQQRMTVAFEFEDKKEDDENAGKVKDLSCQAPWERGQRGITLQPARLSGDCCTPWARCDQQIQDMPVPQNDPQLAWGCISGLQQERSMCTPLPVAAQSTTLPSLSGRQVEINLKRYPTPYPEDLKNMVKSVQNLVGKPSHGVRVENSNPTANTEQTVKEKYEHKWPVAPKEITVEDSFVHPANEMRIGELHPSLAETPLYPPKLVLLGKDKKESTDESEVDKTHCLNNSVSSGTYSDYSPSQASSGSSNTRVKVGSLQTTAKDAVHNSLWGNRIAPSFPQPLDSKPLLSQREAVPPGNIPQRPDRLPMSDTFTDNWTDGSHYDNTGFVAEETTAENANSNPLLSSKSRSTSSHGRRPLIRQDRIVGVPLELEQSTHRHTPETEVPPSNPWQNWTRTPSPFEDRTAFPSKLETTPTTSPLPERKEHIKESTEIPSPFSPGVPWEYHDSNPNRSLSNVFSQIHCRPESSKGVISISKSTERLSPLMKDIKSNKFKKSQSIDEIDIGTYKVYNIPLENYASGSDHLGSHERPDKMLGPEHGMSSMSRSQSVPMLDDEMLTYGSSKGPQQQKASMTKKVYQFDQSFNPQGSVEVKAEKRIPPPFQHNPEYVQQASKNIAKDLISPRAYRGYPPMEQMFSFSQPSVNEDAVVNAQFASQGARAGFLRRADSLVSATEMAMFRRVNEPHELPPTDRYGRPPYRGGLDRQSSVTVTESQFLKRNGRYEDEHPSYQEVKAQAGSFPVKNLTQRRPLSARSYSTESYGASQTRPVSARPTMAALLEKIPSDYNLGNYGDKPSDNSDLKTRPTPVKGEESCGKMPADWRQQLLRHIEARRLDRNAAYKHNTVNLGMLPYGGISAMHAGRSMTLNLQTKSKFDHQELPLQKTPSQQSNILDNGQEDVSPSGQWNPYPLGRRDVPPDTITKKAGSHIQTLMGSQSLQHRSREQQPYEGNINKVTIQQFQSPLPIQIPSSQATRGPQPGRCLIQTKGQRSMDGYPEQFCVRIEKNPGLGFSISGGISGQGNPFKPSDKGIFVTRVQPDGPASNLLQPGDKILQANGHSFVHMEHEKAVLLLKSFQNTVDLVIQRELTV.

LRR repeat units lie at residues isoleucine 23–phenylalanine 44, threonine 47–cysteine 68, alanine 70–leucine 91, asparagine 93–cysteine 114, cysteine 116–leucine 137, asparagine 139–valine 161, lysine 162–leucine 183, glutamine 185–isoleucine 206, asparagine 208–leucine 229, methionine 231–glutamate 253, alanine 254–leucine 275, lysine 277–leucine 298, leucine 300–leucine 321, serine 323–cysteine 344, asparagine 346–methionine 367, lysine 369–lysine 391, and glutamate 392–alanine 413. Residues serine 439, serine 441, and serine 443 each carry the phosphoserine modification. Positions lysine 663 to histidine 676 are enriched in basic and acidic residues. Disordered stretches follow at residues lysine 663–leucine 709, phenylalanine 730–proline 759, alanine 786–leucine 810, and glutamate 824–valine 892. Residues cysteine 677 to leucine 709 are compositionally biased toward polar residues. Residues asparagine 790–serine 804 are compositionally biased toward low complexity. Threonine 831 carries the post-translational modification Phosphothreonine. Serine 850 is subject to Phosphoserine. The segment covering proline 859–leucine 871 has biased composition (low complexity). The residue at position 865 (threonine 865) is a Phosphothreonine. Position 869 is a phosphoserine (serine 869). Residues proline 872–threonine 882 show a composition bias toward basic and acidic residues. Serine 947, serine 949, and serine 1118 each carry phosphoserine. The segment at glutamate 1136–threonine 1159 is disordered. Arginine 1149 carries the post-translational modification Omega-N-methylarginine. Residue serine 1233 is modified to Phosphoserine. Disordered stretches follow at residues aspartate 1234–lysine 1265 and glutamine 1331–glycine 1360. Basic and acidic residues predominate over residues lysine 1243–cysteine 1263. Polar residues predominate over residues lysine 1332–tryptophan 1354. Residues serine 1335 and serine 1439 each carry the phosphoserine modification. Residues glutamate 1445–leucine 1535 enclose the PDZ domain.

It belongs to the LAP (LRR and PDZ) protein family. Interacts with CNKSR2 and DLG4. Interacts with CTNND2/Catenin delta-2. Forms a complex with N-cadherin through CTNND2. Interacts with CAMK2A. In terms of tissue distribution, brain-specific. Isoform 3 is ubiquitously expressed.

It localises to the cytoplasm. Its subcellular location is the postsynaptic density. Functionally, required for normal synaptic spine architecture and function. Necessary for DISC1 and GRM5 localization to postsynaptic density complexes and for both N-methyl D-aspartate receptor-dependent and metabotropic glutamate receptor-dependent long term depression. The protein is Leucine-rich repeat-containing protein 7 (LRRC7) of Homo sapiens (Human).